A 198-amino-acid chain; its full sequence is Holliday junction resolvase RecU (198 aa).

Residues 1 to 29 (MIRYPNGKSYQPKTAASSLQKKPSYSNRG) are disordered. Residues 8–29 (KSYQPKTAASSLQKKPSYSNRG) show a composition bias toward polar residues. Mg(2+) contacts are provided by T83, D85, E98, and Q117.

The protein belongs to the RecU family. It depends on Mg(2+) as a cofactor.

Its subcellular location is the cytoplasm. It catalyses the reaction Endonucleolytic cleavage at a junction such as a reciprocal single-stranded crossover between two homologous DNA duplexes (Holliday junction).. Its function is as follows. Endonuclease that resolves Holliday junction intermediates in genetic recombination. Cleaves mobile four-strand junctions by introducing symmetrical nicks in paired strands. Promotes annealing of linear ssDNA with homologous dsDNA. Required for DNA repair, homologous recombination and chromosome segregation. This Bacillus licheniformis (strain ATCC 14580 / DSM 13 / JCM 2505 / CCUG 7422 / NBRC 12200 / NCIMB 9375 / NCTC 10341 / NRRL NRS-1264 / Gibson 46) protein is Holliday junction resolvase RecU.